The primary structure comprises 272 residues: Shikimate dehydrogenase (NADP(+)) (272 aa).

Residues 14–16 (SKS) and Thr61 each bind shikimate. Lys65 (proton acceptor) is an active-site residue. Glu77 provides a ligand contact to NADP(+). Asn86 and Asp102 together coordinate shikimate. NADP(+) is bound by residues 126–130 (GAGGA), 149–154 (NRTASR), and Met213. Tyr215 contacts shikimate. Residue Gly237 participates in NADP(+) binding.

The protein belongs to the shikimate dehydrogenase family. As to quaternary structure, homodimer.

It carries out the reaction shikimate + NADP(+) = 3-dehydroshikimate + NADPH + H(+). Its pathway is metabolic intermediate biosynthesis; chorismate biosynthesis; chorismate from D-erythrose 4-phosphate and phosphoenolpyruvate: step 4/7. Involved in the biosynthesis of the chorismate, which leads to the biosynthesis of aromatic amino acids. Catalyzes the reversible NADPH linked reduction of 3-dehydroshikimate (DHSA) to yield shikimate (SA). The sequence is that of Shikimate dehydrogenase (NADP(+)) from Salmonella heidelberg (strain SL476).